The chain runs to 89 residues: Neurotoxin beta-KTx 12 (89 aa).

An N-terminal signal peptide occupies residues 1–20; that stretch reads MKQYIFFLALIVLVSTFAEA. Residues 21–39 constitute a propeptide that is removed on maturation; sequence GKKTEILDKVKKVFSKAKD. The BetaSPN-type CS-alpha/beta domain maps to 53 to 89; sequence ELGCPFIDKWCEDHCESKKLVGKCENFDCSCVKLGGK. Cystine bridges form between C56-C76, C63-C81, and C67-C83.

It belongs to the long chain scorpion toxin family. Class 2 subfamily. In terms of tissue distribution, expressed by the venom gland.

It is found in the secreted. Its function is as follows. Inhibits voltage-gated potassium channel. The protein is Neurotoxin beta-KTx 12 of Lychas mucronatus (Chinese swimming scorpion).